Reading from the N-terminus, the 121-residue chain is Small ribosomal subunit protein uS13 (121 aa).

The interval 91 to 121 (HRRGLPVRGQNSKNNARTRKGPRRTVANKKK) is disordered. A compositionally biased stretch (basic residues) spans 106–121 (ARTRKGPRRTVANKKK).

It belongs to the universal ribosomal protein uS13 family. Part of the 30S ribosomal subunit. Forms a loose heterodimer with protein S19. Forms two bridges to the 50S subunit in the 70S ribosome.

Located at the top of the head of the 30S subunit, it contacts several helices of the 16S rRNA. In the 70S ribosome it contacts the 23S rRNA (bridge B1a) and protein L5 of the 50S subunit (bridge B1b), connecting the 2 subunits; these bridges are implicated in subunit movement. Contacts the tRNAs in the A and P-sites. This chain is Small ribosomal subunit protein uS13, found in Bacillus cereus (strain ZK / E33L).